The chain runs to 329 residues: MLLKEYRICMPLTVEEYRIGQLYMISKHSHEQSERGEGVEVVQNEPYEDPVHGQGQLTEKRVYLNSKLPSWARAVVPKIFYVTEKAWNYYPYTITEYTCSFLPKFSIHIETKYEDNKGSNDNIFESEAKDAEREICFVDIACDEIPERYYKESEDPKNFVSEKTGRGQLKEGWREAQEPIMCSYKLVAVKFEVWGLQSRVEQFVHKVVRDILLIGHRQAFAWVDEWYDMTMDEVREYERTTQEATNRKIGVFPPAISISDITLPSHSHGGYSSAPSTPLATDAPEFLSVPKDRPRKKSAPETLTLPDPSQICLNVQPGAGNKPSLAKPE.

The interval 267 to 329 (SHGGYSSAPS…GNKPSLAKPE (63 aa)) is disordered.

Belongs to the PtdIns transfer protein family. PI transfer class IIB subfamily.

The protein localises to the cytoplasm. The enzyme catalyses a 1,2-diacyl-sn-glycero-3-phospho-(1D-myo-inositol)(in) = a 1,2-diacyl-sn-glycero-3-phospho-(1D-myo-inositol)(out). It catalyses the reaction a 1,2-diacyl-sn-glycero-3-phosphate(in) = a 1,2-diacyl-sn-glycero-3-phosphate(out). Its function is as follows. Catalyzes the transfer of phosphatidylinositol (PI) and phosphatidic acid (PA) between membranes. Binds PA derived from the phospholipase D signaling pathway and among the cellular PA species, preferably binds to the C16:0/16:1 and C16:1/18:1 PA species. In Xenopus tropicalis (Western clawed frog), this protein is Cytoplasmic phosphatidylinositol transfer protein 1 (pitpnc1).